The following is a 504-amino-acid chain: Deoxyguanosinetriphosphate triphosphohydrolase (504 aa).

The region spanning 66–273 (RLTHSMEVQQ…MEAADDISYC (208 aa)) is the HD domain.

The protein belongs to the dGTPase family. Type 1 subfamily. Homotetramer. Mg(2+) is required as a cofactor.

It carries out the reaction dGTP + H2O = 2'-deoxyguanosine + triphosphate + H(+). Functionally, dGTPase preferentially hydrolyzes dGTP over the other canonical NTPs. The chain is Deoxyguanosinetriphosphate triphosphohydrolase from Citrobacter koseri (strain ATCC BAA-895 / CDC 4225-83 / SGSC4696).